Here is a 207-residue protein sequence, read N- to C-terminus: Proteasome subunit beta (207 aa).

Residues 1–9 (MSNKNTFEG) constitute a propeptide, removed in mature form; by autocatalysis. The Nucleophile role is filled by Thr10.

The protein belongs to the peptidase T1B family. As to quaternary structure, the 20S proteasome core is composed of 14 alpha and 14 beta subunits that assemble into four stacked heptameric rings, resulting in a barrel-shaped structure. The two inner rings, each composed of seven catalytic beta subunits, are sandwiched by two outer rings, each composed of seven alpha subunits. The catalytic chamber with the active sites is on the inside of the barrel. Has a gated structure, the ends of the cylinder being occluded by the N-termini of the alpha-subunits. Is capped at one or both ends by the proteasome regulatory ATPase, PAN.

Its subcellular location is the cytoplasm. The enzyme catalyses Cleavage of peptide bonds with very broad specificity.. The formation of the proteasomal ATPase PAN-20S proteasome complex, via the docking of the C-termini of PAN into the intersubunit pockets in the alpha-rings, triggers opening of the gate for substrate entry. Interconversion between the open-gate and close-gate conformations leads to a dynamic regulation of the 20S proteasome proteolysis activity. Functionally, component of the proteasome core, a large protease complex with broad specificity involved in protein degradation. This is Proteasome subunit beta from Methanobrevibacter ruminantium (strain ATCC 35063 / DSM 1093 / JCM 13430 / OCM 146 / M1) (Methanobacterium ruminantium).